Here is a 261-residue protein sequence, read N- to C-terminus: Cytochrome c oxidase subunit 3 (261 aa).

The Mitochondrial matrix segment spans residues 1 to 15 (MTHQTHAYHMVNPSP). A helical transmembrane segment spans residues 16–34 (WPLTGALSALLMTSGLIMW). Residues 35–40 (FHFNST) lie on the Mitochondrial intermembrane side of the membrane. A helical transmembrane segment spans residues 41–66 (TLLMLGLTTNMLTMYQWWRDVIREST). Over 67–72 (FQGHHT) the chain is Mitochondrial matrix. A helical membrane pass occupies residues 73-105 (PNVQKGLRYGMILFIISEVLFFTGFFWAFYHSS). The Mitochondrial intermembrane portion of the chain corresponds to 106 to 128 (LAPTPELGGCWPPTGINPLNPLE). Residues 129–152 (VPLLNTSVLLASGVSITWAHHSLM) form a helical membrane-spanning segment. Residues 153–155 (EGN) lie on the Mitochondrial matrix side of the membrane. A helical membrane pass occupies residues 156–183 (RNHMLQALFITIALGVYFTLLQASEYYE). At 184–190 (APFTISD) the chain is on the mitochondrial intermembrane side. A helical transmembrane segment spans residues 191–223 (GVYGSTFFVATGFHGLHVIIGSTFLIVCFFRQL). The Mitochondrial matrix segment spans residues 224 to 232 (KFHFTSNHH). Residues 233-256 (FGFEAAAWYWHFVDVVWLFLYVSI) traverse the membrane as a helical segment. Residues 257–261 (YWWGS) are Mitochondrial intermembrane-facing.

This sequence belongs to the cytochrome c oxidase subunit 3 family. In terms of assembly, component of the cytochrome c oxidase (complex IV, CIV), a multisubunit enzyme composed of 14 subunits. The complex is composed of a catalytic core of 3 subunits MT-CO1, MT-CO2 and MT-CO3, encoded in the mitochondrial DNA, and 11 supernumerary subunits COX4I, COX5A, COX5B, COX6A, COX6B, COX6C, COX7A, COX7B, COX7C, COX8 and NDUFA4, which are encoded in the nuclear genome. The complex exists as a monomer or a dimer and forms supercomplexes (SCs) in the inner mitochondrial membrane with NADH-ubiquinone oxidoreductase (complex I, CI) and ubiquinol-cytochrome c oxidoreductase (cytochrome b-c1 complex, complex III, CIII), resulting in different assemblies (supercomplex SCI(1)III(2)IV(1) and megacomplex MCI(2)III(2)IV(2)).

The protein localises to the mitochondrion inner membrane. It catalyses the reaction 4 Fe(II)-[cytochrome c] + O2 + 8 H(+)(in) = 4 Fe(III)-[cytochrome c] + 2 H2O + 4 H(+)(out). Its function is as follows. Component of the cytochrome c oxidase, the last enzyme in the mitochondrial electron transport chain which drives oxidative phosphorylation. The respiratory chain contains 3 multisubunit complexes succinate dehydrogenase (complex II, CII), ubiquinol-cytochrome c oxidoreductase (cytochrome b-c1 complex, complex III, CIII) and cytochrome c oxidase (complex IV, CIV), that cooperate to transfer electrons derived from NADH and succinate to molecular oxygen, creating an electrochemical gradient over the inner membrane that drives transmembrane transport and the ATP synthase. Cytochrome c oxidase is the component of the respiratory chain that catalyzes the reduction of oxygen to water. Electrons originating from reduced cytochrome c in the intermembrane space (IMS) are transferred via the dinuclear copper A center (CU(A)) of subunit 2 and heme A of subunit 1 to the active site in subunit 1, a binuclear center (BNC) formed by heme A3 and copper B (CU(B)). The BNC reduces molecular oxygen to 2 water molecules using 4 electrons from cytochrome c in the IMS and 4 protons from the mitochondrial matrix. This is Cytochrome c oxidase subunit 3 (MT-CO3) from Gazella subgutturosa (Goitred gazelle).